Consider the following 287-residue polypeptide: uncharacterized protein (287 aa).

Helical transmembrane passes span 7-28, 32-54, 67-86, 91-113, 120-139, 144-163, 170-192, 202-224, 231-253, and 263-280; these read LLLT…RAAL, AIDA…AVLL, GWRG…YAYV, GTGA…LLRG, ALLG…LPGA, LGGA…YTLL, PLAV…LLAF, GLAY…WYSA, IQGA…LLLG, and ATLA…PRLG. 2 EamA domains span residues 15–136 and 155–276; these read LAFA…FLLL and LAWG…LILA.

The protein localises to the cell membrane. This is an uncharacterized protein from Pseudomonas aeruginosa (strain ATCC 15692 / DSM 22644 / CIP 104116 / JCM 14847 / LMG 12228 / 1C / PRS 101 / PAO1).